We begin with the raw amino-acid sequence, 312 residues long: uncharacterized protein (312 aa).

Helical transmembrane passes span 9–29 (LTLT…GLFI), 115–135 (LATL…IGFI), 187–207 (ITIA…DYIT), 224–244 (ITVA…AGEF), 264–284 (ILSS…IYGF), and 292–312 (MIST…TLIL).

The protein localises to the cell membrane. This is an uncharacterized protein from Methanocaldococcus jannaschii (strain ATCC 43067 / DSM 2661 / JAL-1 / JCM 10045 / NBRC 100440) (Methanococcus jannaschii).